The sequence spans 769 residues: Disintegrin and metalloproteinase domain-containing protein 11 (769 aa).

A signal peptide spans 1–23 (MRLLRRWAFAALLLSLLPTPGLG). Positions 24 to 225 (TQGPAGALRW…PNRPRLRRKR (202 aa)) are excised as a propeptide. A disordered region spans residues 40-78 (GGPGAPEVTEPSRLVRESSGGEVRKQQLDTRVRQEPPGG). A compositionally biased stretch (basic and acidic residues) spans 61–73 (EVRKQQLDTRVRQ). 2 N-linked (GlcNAc...) asparagine glycosylation sites follow: Asn-96 and Asn-163. Topologically, residues 226-734 (QVRRGHPTVH…ERYKGPSGTN (509 aa)) are extracellular. The Peptidase M12B domain occupies 239–438 (KYVELIVIND…GGGSCLFNKP (200 aa)). The required for localization to cerebellar cortex basket cell terminals. Also required for localization of KCNA1, KCNA2, DLG4 and ADAM22 to cerebellar cortex basket cell terminal perisomatic axons and pinceaux stretch occupies residues 332 to 769 (GRTFQSTSSG…NIRRGRSGGA (438 aa)). Cystine bridges form between Cys-349–Cys-433, Cys-392–Cys-417, Cys-394–Cys-401, and Cys-503–Cys-523. Residues 444–531 (PPECGNGFVE…QCPPNLHKLD (88 aa)) enclose the Disintegrin domain. 2 N-linked (GlcNAc...) asparagine glycosylation sites follow: Asn-605 and Asn-673. Intrachain disulfides connect Cys-677-Cys-692, Cys-686-Cys-698, and Cys-700-Cys-709. The EGF-like domain maps to 677–709 (CPGSGERRICSHHGVCSNEGKCICQPDWTGKDC). A helical transmembrane segment spans residues 735–755 (IIIGSIAGAVLVAAIVLGGTG). Over 756–769 (WGFKNIRRGRSGGA) the chain is Cytoplasmic.

As to quaternary structure, interacts with LGI1 and LGI4. Interacts with KCNA1/KV1.1, KCNA2/KV1.2, DLG4/PSD-95 and ADAM22. The precursor is cleaved by a furin endopeptidase. As to expression, expressed predominantly in brain. Slightly detected or not at all in other tissues.

The protein resides in the presynaptic cell membrane. It is found in the perikaryon. Its subcellular location is the cell projection. It localises to the axon. Probable ligand for integrin in the brain. This is a non catalytic metalloprotease-like protein. Required for localization of the potassium channel subunit proteins KCNA1/KV1.1 and KCNA2/KV1.2 at cerebellar cortex basket cell distal terminals, is thereby involved in ephaptic inhibitory synchronization of Purkinje cell firing and response to stress. Plays a role in spatial learning and motor coordination. Involved in the nociceptive pain response to chemical-derived stimulation. This is Disintegrin and metalloproteinase domain-containing protein 11 (ADAM11) from Homo sapiens (Human).